The chain runs to 170 residues: Large ribosomal subunit protein uL6m (170 aa).

Belongs to the universal ribosomal protein uL6 family.

It is found in the mitochondrion. This is Large ribosomal subunit protein uL6m (mrpl6) from Dictyostelium discoideum (Social amoeba).